Here is a 94-residue protein sequence, read N- to C-terminus: MAVFRVLLASLLISLLVLDFVHADMVTSNDAPKIDCNSRCQERCSLSSRPNLCHRACGTCCARCNCVAPGTSGNYDKCPCYGSLTTHGGRRKCP.

The first 23 residues, 1–23 (MAVFRVLLASLLISLLVLDFVHA), serve as a signal peptide directing secretion.

The protein belongs to the GASA family. In terms of processing, six disulfide bonds may be present.

The protein localises to the secreted. In terms of biological role, gibberellin-regulated protein that may function in hormonal controlled steps of development such as seed germination, flowering and seed maturation. The chain is Gibberellin-regulated protein 11 (GASA11) from Arabidopsis thaliana (Mouse-ear cress).